The sequence spans 446 residues: MFSIIIPIYNSENYLRYSIESVLNQSIGFKENIELILIDDGSVDSSPQICESFKNLYPNNIKIMKIENSGPSAARNCGLSNVSERSKFIGFLDSDDAFSQNALQSVYDFFCDSEHVNIAVLPVYYTGEKEGGHKLNNRFEKGTRVINILNDYKAIHFYIGGTFYRRHTLTSTVLFDESIKFWEDAIFFNQLLLKEKRYGAVAEGKYFYRKRKEQDSLVDRSWFNKKRYTYLLNECYMTLLMDSFNKYDIVLPYLQFLIVYHIKLFLYPNYRDVYKSVLDQQEQRVFVDDFIKVLKFIDPQFIKEQDMPMYYKEFMFHLLKENTEALENIKKERVLHSSCTVTSAKIKGLRLELTGHFINQYYEMKENDRIYIKYFKRLKKCKRKELKKTIEVWGYKLRDFRYAGFVVEIPIWAFAFDFVLKTPNDSLELNHVNIFKSLLTRVFKKR.

The protein belongs to the glycosyltransferase 2 family.

It participates in cell wall biogenesis; poly(glucopyranosyl N-acetylgalactosamine 1-phosphate) teichoic acid biosynthesis. Involved in the biosynthesis of galactosamine-containing minor teichoic acid, a non-essential cell wall polymer in B.subtilis 168. The chain is Minor teichoic acid biosynthesis protein GgaA (ggaA) from Bacillus subtilis (strain 168).